The sequence spans 660 residues: DNA mismatch repair protein MutL (660 aa).

Over residues 341 to 355 (SFQSDGAPPTQQLSS) the composition is skewed to polar residues. Disordered regions lie at residues 341–362 (SFQS…EKAE) and 378–398 (ALSP…RVER). A compositionally biased stretch (basic and acidic residues) spans 385–398 (ELPKSPERSERVER).

It belongs to the DNA mismatch repair MutL/HexB family.

In terms of biological role, this protein is involved in the repair of mismatches in DNA. It is required for dam-dependent methyl-directed DNA mismatch repair. May act as a 'molecular matchmaker', a protein that promotes the formation of a stable complex between two or more DNA-binding proteins in an ATP-dependent manner without itself being part of a final effector complex. The chain is DNA mismatch repair protein MutL from Heliobacterium modesticaldum (strain ATCC 51547 / Ice1).